A 528-amino-acid polypeptide reads, in one-letter code: Phosphoenolpyruvate carboxykinase (ATP) (528 aa).

Residues Arg-56, Tyr-192, and Lys-198 each coordinate substrate. ATP contacts are provided by residues Lys-198, His-217, and 233 to 241 (GLSGTGKTT). 2 residues coordinate Mn(2+): Lys-198 and His-217. Residue Asp-254 participates in Mn(2+) binding. Positions 282, 319, and 444 each coordinate ATP. Arg-319 serves as a coordination point for substrate.

This sequence belongs to the phosphoenolpyruvate carboxykinase (ATP) family. It depends on Mn(2+) as a cofactor.

The protein resides in the cytoplasm. The enzyme catalyses oxaloacetate + ATP = phosphoenolpyruvate + ADP + CO2. It functions in the pathway carbohydrate biosynthesis; gluconeogenesis. Functionally, involved in the gluconeogenesis. Catalyzes the conversion of oxaloacetate (OAA) to phosphoenolpyruvate (PEP) through direct phosphoryl transfer between the nucleoside triphosphate and OAA. The sequence is that of Phosphoenolpyruvate carboxykinase (ATP) from Bacillus cereus (strain AH187).